We begin with the raw amino-acid sequence, 987 residues long: Collagen alpha-1(I) chain (987 aa).

Residues 1-21 are compositionally biased toward pro residues; the sequence is SVPGPMGPSGPRGLPGPPGPG. The segment at 1 to 987 is disordered; sequence SVPGPMGPSG…PGPPGPPGPP (987 aa). 11 positions are modified to 4-hydroxyproline: Pro15, Pro18, Pro20, Pro29, Pro32, Pro35, Pro50, Pro65, Pro71, Pro80, and Pro86. Over residues 23–41 the composition is skewed to low complexity; it reads QGFQGPPGEPGEPGSSGPM. Residues 53–67 are compositionally biased toward basic and acidic residues; the sequence is NGDDGEAGKPGRPGE. 5-hydroxylysine; alternate is present on Lys89. Lys89 carries an O-linked (Gal...) hydroxylysine; alternate glycan. The residue at position 95 (Ser95) is a Phosphoserine. Positions 103–119 are enriched in low complexity; that stretch reads DAGPAGPKGEPGSPGEN. A 4-hydroxyproline mark is found at Pro113, Pro116, Pro122, Pro131, Pro137, Pro158, Pro167, Pro170, Pro197, Pro200, Pro212, Pro218, Pro227, Pro233, Pro236, and Pro251. Residues 137 to 155 show a composition bias toward low complexity; sequence PGASGPAGARGNDGAAGAA. Positions 157–169 are enriched in pro residues; it reads PPGPTGPAGPPGF. A compositionally biased stretch (low complexity) spans 203–253; it reads AGAAGPAGNPGADGQPGAKGANGAPGIAGAPGFPGARGPSGPQGPSGAPGP. Lys254 bears the 5-hydroxylysine mark. 4-hydroxyproline occurs at positions 260, 263, 275, 284, 299, 305, 314, and 320. Residues 309 to 318 show a composition bias toward gly residues; that stretch reads GERGGPGSRG. Position 329 is a 5-hydroxylysine (Lys329). A 4-hydroxyproline mark is found at Pro338, Pro347, Pro353, Pro359, Pro368, Pro371, Pro380, Pro389, Pro395, Pro407, Pro416, Pro425, Pro428, Pro446, Pro468, Pro474, Pro480, Pro486, Pro492, Pro504, Pro513, Pro526, Pro532, and Pro541. The segment covering 362–388 has biased composition (low complexity); it reads KGLTGSPGSPGPDGKTGPPGPAGQDGR. Residues 397 to 416 are compositionally biased toward low complexity; that stretch reads ARGQAGVMGFPGPKGAAGEP. Residues 458 to 483 show a composition bias toward low complexity; that stretch reads QGPAPGFQGLPGPAGPPGEAGKPGEQ. Lys553 is subject to 5-hydroxylysine. Pro559, Pro574, and Pro580 each carry 4-hydroxyproline. Residues 586–600 show a composition bias toward low complexity; the sequence is SGPSGPAGPTGARGA. Phosphoserine is present on Ser589. Pro601, Pro607, Pro610, Pro619, Pro625, Pro643, Pro652, and Pro661 each carry 4-hydroxyproline. The segment covering 613–640 has biased composition (low complexity); the sequence is AGFAGPPGADGQPGAKGEPGDAGAKGDA. Residues 642–654 are compositionally biased toward pro residues; it reads PPGPAGPTGPPGP. Position 664 is a 5-hydroxylysine (Lys664). Residues 669-685 are compositionally biased toward low complexity; it reads SAGPPGATGFPGAAGRV. Pro673 and Pro679 each carry 4-hydroxyproline. 3-hydroxyproline is present on Pro687. A 4-hydroxyproline mark is found at Pro688, Pro697, Pro700, Pro721, Pro730, Pro738, Pro747, Pro765, Pro774, Pro777, Pro783, Pro798, Pro804, Pro810, Pro819, and Pro825. The span at 714–723 shows a compositional bias: low complexity; the sequence is ETGPAGRPGE. The segment covering 735–747 has biased composition (low complexity); the sequence is KGSPGADGPAGAP. Over residues 797–807 the composition is skewed to pro residues; sequence PPGPMGPPGLA. Low complexity predominate over residues 809 to 824; the sequence is PPGESGREGSPGAEGS. Position 834 is a 5-hydroxylysine (Lys834). Over residues 843-858 the composition is skewed to pro residues; it reads AGPPGAPGAPGAPGPV. 4-hydroxyproline occurs at positions 846, 849, and 852. Residues 879–893 show a composition bias toward low complexity; it reads AGPAGARGPAGPQGP. The span at 894–905 shows a compositional bias: basic and acidic residues; the sequence is RGDKGETGEQGD. The residue at position 897 (Lys897) is a 5-hydroxylysine. 4-hydroxyproline is present on residues Pro918, Pro921, Pro939, and Pro954. Positions 921-954 are enriched in low complexity; sequence PGEQGPSGASGPAGPRGPPGSAGSPGKDGLNGLP. Pro959 carries the 3-hydroxyproline modification. Pro960 carries the 4-hydroxyproline modification. Residues 972–987 show a composition bias toward pro residues; it reads VGPPGPPGPPGPPGPP. Position 974 is a 3-hydroxyproline (Pro974). Pro975 carries the 4-hydroxyproline modification. 3-hydroxyproline is present on Pro977. Pro978 carries the 4-hydroxyproline modification. Pro980 bears the 3-hydroxyproline mark. 3 positions are modified to 4-hydroxyproline: Pro981, Pro984, and Pro987.

This sequence belongs to the fibrillar collagen family. Trimers of one alpha 2(I) and two alpha 1(I) chains. Post-translationally, contains mostly 4-hydroxyproline. Proline residues at the third position of the tripeptide repeating unit (G-X-Y) are hydroxylated in some or all of the chains. In terms of processing, contains 3-hydroxyproline at a few sites. This modification occurs on the first proline residue in the sequence motif Gly-Pro-Hyp, where Hyp is 4-hydroxyproline. Lysine residues at the third position of the tripeptide repeating unit (G-X-Y) are 5-hydroxylated in some or all of the chains. Post-translationally, O-glycosylated on hydroxylated lysine residues. The O-linked glycan consists of a Glc-Gal disaccharide. In terms of tissue distribution, expressed in bones.

The protein localises to the secreted. It is found in the extracellular space. It localises to the extracellular matrix. Type I collagen is a member of group I collagen (fibrillar forming collagen). This chain is Collagen alpha-1(I) chain, found in Glossotherium robustum (Ground sloth).